We begin with the raw amino-acid sequence, 147 residues long: Spermidine export protein MdtJ (147 aa).

Transmembrane regions (helical) follow at residues methionine 1–methionine 21, threonine 31–valine 51, valine 54–phenylalanine 74, and glutamate 81–valine 101. The tract at residues threonine 105–alanine 147 is disordered.

It belongs to the drug/metabolite transporter (DMT) superfamily. Small multidrug resistance (SMR) (TC 2.A.7.1) family. MdtJ subfamily. In terms of assembly, forms a complex with MdtI.

It localises to the cell inner membrane. Functionally, catalyzes the excretion of spermidine. The sequence is that of Spermidine export protein MdtJ from Yersinia pestis bv. Antiqua (strain Antiqua).